The following is a 260-amino-acid chain: Cytosolic Fe-S cluster assembly factor Nubp2 homolog (260 aa).

14–21 (GKGGVGKS) is a binding site for ATP. 2 residues coordinate [4Fe-4S] cluster: cysteine 188 and cysteine 191.

Belongs to the Mrp/NBP35 ATP-binding proteins family. NUBP2/CFD1 subfamily. As to quaternary structure, heterotetramer of 2 Nubp1 and 2 Nubp2 chains. Requires [4Fe-4S] cluster as cofactor.

The protein localises to the cytoplasm. Functionally, component of the cytosolic iron-sulfur (Fe/S) protein assembly (CIA) machinery. Required for maturation of extramitochondrial Fe-S proteins. The Nubp1-Nubp2 heterotetramer forms a Fe-S scaffold complex, mediating the de novo assembly of an Fe-S cluster and its transfer to target apoproteins. The chain is Cytosolic Fe-S cluster assembly factor Nubp2 homolog from Drosophila erecta (Fruit fly).